The following is a 635-amino-acid chain: Histone-lysine N-methyltransferase Su(var)3-9 (635 aa).

The tract at residues 81–188 (ERLSEKKIKN…LNGFAKLKRR (108 aa)) is binds to Su(var)205 and Suvar(3)7. 2 disordered regions span residues 123–161 (RLCTKPASSSMPASTSSVDRRTTRRSTSQTSLSPSNSSG) and 191–210 (SCVGAPTPNSKRSKNNMGVI). Composition is skewed to low complexity over residues 128 to 139 (PASSSMPASTSS) and 147 to 161 (RSTSQTSLSPSNSSG). The Chromo domain maps to 219-278 (YVVERIECVEMDQYQPVFFVKWLGYHDSENTWESLANVADCAEMEKFVERHQQLYETYIA). The Pre-SET domain maps to 410–474 (VGCKCTEDTE…SCSNRLVQHG (65 aa)). The Zn(2+) site is built by cysteine 412, cysteine 414, cysteine 421, cysteine 427, cysteine 428, cysteine 456, cysteine 460, cysteine 462, and cysteine 466. An SET domain is found at 477–603 (VPLVLFKTAN…AGEELSFDYI (127 aa)). Residues 488–490 (SGW), tyrosine 531, and 560–561 (NH) contribute to the S-adenosyl-L-methionine site. Zn(2+)-binding residues include cysteine 563, cysteine 623, cysteine 625, and cysteine 630. One can recognise a Post-SET domain in the interval 619–635 (VRVECRCGRDNCRKVLF).

This sequence belongs to the class V-like SAM-binding methyltransferase superfamily. Histone-lysine methyltransferase family. Suvar3-9 subfamily. In terms of assembly, interacts with Su(var)205 and Su(var)3-7. Probably associates with HDAC1/Rpd3. Interacts with Rrp6; the interaction promotes association of Rrp6 with a subset of genomic loci.

The protein resides in the nucleus. It localises to the chromosome. It is found in the centromere. It catalyses the reaction L-lysyl(9)-[histone H3] + 3 S-adenosyl-L-methionine = N(6),N(6),N(6)-trimethyl-L-lysyl(9)-[histone H3] + 3 S-adenosyl-L-homocysteine + 3 H(+). Functionally, histone methyltransferase that specifically trimethylates 'Lys-9' of histone H3 using monomethylated H3 'Lys-9' as substrate. H3 'Lys-9' trimethylation represents a specific tag for epigenetic transcriptional repression by recruiting Su(var)205/HP1 to methylated histones. Mainly functions in heterochromatin regions, thereby playing a central role in the establishment of constitutive heterochromatin at pericentric regions. Involved in heterochromatic gene silencing including the modification of position-effect-variegation. The chain is Histone-lysine N-methyltransferase Su(var)3-9 (Su(var)3-9) from Drosophila melanogaster (Fruit fly).